Reading from the N-terminus, the 123-residue chain is Large ribosomal subunit protein uL14 (123 aa).

The protein belongs to the universal ribosomal protein uL14 family. In terms of assembly, part of the 50S ribosomal subunit. Forms a cluster with proteins L3 and L19. In the 70S ribosome, L14 and L19 interact and together make contacts with the 16S rRNA in bridges B5 and B8.

In terms of biological role, binds to 23S rRNA. Forms part of two intersubunit bridges in the 70S ribosome. This Wigglesworthia glossinidia brevipalpis protein is Large ribosomal subunit protein uL14.